Reading from the N-terminus, the 472-residue chain is Ribosomal protein uS12 methylthiotransferase RimO (472 aa).

Positions 33–143 (NRIGFVSLGC…VLKHVHKYVP (111 aa)) constitute an MTTase N-terminal domain. The [4Fe-4S] cluster site is built by C42, C78, C107, C175, C179, and C182. The Radical SAM core domain maps to 161–398 (LTPKHYAYLK…MEVQAEISAE (238 aa)). The TRAM domain occupies 401 to 467 (ARFVGRTLDI…EHDLWAEVVD (67 aa)).

It belongs to the methylthiotransferase family. RimO subfamily. [4Fe-4S] cluster serves as cofactor.

It localises to the cytoplasm. It catalyses the reaction L-aspartate(89)-[ribosomal protein uS12]-hydrogen + (sulfur carrier)-SH + AH2 + 2 S-adenosyl-L-methionine = 3-methylsulfanyl-L-aspartate(89)-[ribosomal protein uS12]-hydrogen + (sulfur carrier)-H + 5'-deoxyadenosine + L-methionine + A + S-adenosyl-L-homocysteine + 2 H(+). In terms of biological role, catalyzes the methylthiolation of an aspartic acid residue of ribosomal protein uS12. This chain is Ribosomal protein uS12 methylthiotransferase RimO, found in Shewanella baltica (strain OS185).